A 282-amino-acid chain; its full sequence is Protein canopy homolog 3 (282 aa).

The signal sequence occupies residues 1–33 (MEPLPEPASGPRPRPHRLLLLSLLLLLLPLLPA). The Saposin B-type domain maps to 53–275 (SKCEVCKYVA…EGIQKASPLT (223 aa)). 3 disulfides stabilise this stretch: Cys-55–Cys-212, Cys-58–Cys-200, and Cys-110–Cys-172. N-linked (GlcNAc...) asparagine glycosylation occurs at Asn-159. The stretch at 159–185 (NETSAEVADLKKQCDVLVEEFEEVIED) forms a coiled coil. The tract at residues 221-282 (KGDTAALGGK…PLTHSPPDEL (62 aa)) is disordered. Acidic residues predominate over residues 255-266 (DLDGDPSPEEDE).

Belongs to the canopy family. As to quaternary structure, interacts with HSP90B1; this interaction is disrupted in the presence of ATP. Interacts with TLR1, TLR2, TLR4 and TLR9.

Its subcellular location is the endoplasmic reticulum. Its function is as follows. Toll-like receptor (TLR)-specific co-chaperone for HSP90B1. Required for proper TLR folding, except that of TLR3, and hence controls TLR exit from the endoplasmic reticulum. Consequently, required for both innate and adaptive immune responses. This is Protein canopy homolog 3 (CNPY3) from Bos taurus (Bovine).